We begin with the raw amino-acid sequence, 284 residues long: Putative mitochondrial carrier protein PET8 (284 aa).

Solcar repeat units follow at residues 2-75 (NTFF…MKVK), 92-178 (IDTT…LKKT), and 192-271 (KGAI…VHSL). Transmembrane regions (helical) follow at residues 5–25 (FLSL…FFPI), 50–70 (GLGS…ISYD), 98–118 (MLSS…AEVV), 153–169 (GWST…CIQF), 194–214 (AICG…LDFL), and 252–272 (MWIS…HSLL).

It belongs to the mitochondrial carrier (TC 2.A.29) family.

Its subcellular location is the mitochondrion inner membrane. The chain is Putative mitochondrial carrier protein PET8 (PET8) from Saccharomyces cerevisiae (strain ATCC 204508 / S288c) (Baker's yeast).